A 120-amino-acid chain; its full sequence is Large ribosomal subunit protein uL18 (120 aa).

The protein belongs to the universal ribosomal protein uL18 family. As to quaternary structure, part of the 50S ribosomal subunit; part of the 5S rRNA/L5/L18/L25 subcomplex. Contacts the 5S and 23S rRNAs.

Functionally, this is one of the proteins that bind and probably mediate the attachment of the 5S RNA into the large ribosomal subunit, where it forms part of the central protuberance. This Bartonella tribocorum (strain CIP 105476 / IBS 506) protein is Large ribosomal subunit protein uL18.